Here is a 134-residue protein sequence, read N- to C-terminus: Translation initiation factor 2 subunit beta (134 aa).

This sequence belongs to the eIF-2-beta/eIF-5 family. In terms of assembly, heterotrimer composed of an alpha, a beta and a gamma chain.

Its function is as follows. eIF-2 functions in the early steps of protein synthesis by forming a ternary complex with GTP and initiator tRNA. In Pyrobaculum aerophilum (strain ATCC 51768 / DSM 7523 / JCM 9630 / CIP 104966 / NBRC 100827 / IM2), this protein is Translation initiation factor 2 subunit beta.